A 195-amino-acid polypeptide reads, in one-letter code: dTTP/UTP pyrophosphatase (195 aa).

Aspartate 73 acts as the Proton acceptor in catalysis.

Belongs to the Maf family. YhdE subfamily. A divalent metal cation is required as a cofactor.

It is found in the cytoplasm. The catalysed reaction is dTTP + H2O = dTMP + diphosphate + H(+). It catalyses the reaction UTP + H2O = UMP + diphosphate + H(+). Functionally, nucleoside triphosphate pyrophosphatase that hydrolyzes dTTP and UTP. May have a dual role in cell division arrest and in preventing the incorporation of modified nucleotides into cellular nucleic acids. This Exiguobacterium sibiricum (strain DSM 17290 / CCUG 55495 / CIP 109462 / JCM 13490 / 255-15) protein is dTTP/UTP pyrophosphatase.